The primary structure comprises 357 residues: Fructose-bisphosphate aldolase, cytoplasmic isozyme 1 (357 aa).

Substrate is bound by residues Arg52 and Lys142. Catalysis depends on Glu183, which acts as the Proton acceptor. The active-site Schiff-base intermediate with dihydroxyacetone-P is Lys225.

The protein belongs to the class I fructose-bisphosphate aldolase family.

It localises to the cytoplasm. It catalyses the reaction beta-D-fructose 1,6-bisphosphate = D-glyceraldehyde 3-phosphate + dihydroxyacetone phosphate. The protein operates within carbohydrate degradation; glycolysis; D-glyceraldehyde 3-phosphate and glycerone phosphate from D-glucose: step 4/4. This chain is Fructose-bisphosphate aldolase, cytoplasmic isozyme 1, found in Pisum sativum (Garden pea).